The following is a 367-amino-acid chain: Cytochrome-c peroxidase IdrP2 (367 aa).

Positions 1-28 (MTTHQSIRRLSRIAALVGLAFVAGTVAA) are cleaved as a signal peptide. Cytochrome c domains lie at 47-157 (DMVE…AMWQ) and 200-345 (SQQK…EALS). Heme c contacts are provided by cysteine 69, cysteine 72, histidine 73, cysteine 215, cysteine 218, and histidine 219.

The iodate reductase (Idr) complex is composed of a molybdopterin-dependent iodate reductase (IdrA and IdrB subunits) and two associated peroxidases (IdrP1 and IdrP2). Heme c is required as a cofactor.

The protein localises to the periplasm. The enzyme catalyses 2 Fe(II)-[cytochrome c] + H2O2 + 2 H(+) = 2 Fe(III)-[cytochrome c] + 2 H2O. Involved in iodate respiration. May play a critical role in detoxification of inadvertent H(2)O(2) generated by the iodate reductase IdrA/IdrB. This is Cytochrome-c peroxidase IdrP2 from Denitromonas iodatirespirans.